Reading from the N-terminus, the 141-residue chain is Hemoglobin subunit alpha-D (141 aa).

Residues 1–141 (MLTAEDKKLI…VAAVLAEKYR (141 aa)) form the Globin domain. Heme b contacts are provided by His-58 and His-87.

This sequence belongs to the globin family. As to quaternary structure, heterotetramer of two alpha-D chains and two beta chains. In terms of tissue distribution, red blood cells.

Its function is as follows. Involved in oxygen transport from the lung to the various peripheral tissues. The sequence is that of Hemoglobin subunit alpha-D (HBAD) from Cairina moschata (Muscovy duck).